Here is a 305-residue protein sequence, read N- to C-terminus: UDP-3-O-acyl-N-acetylglucosamine deacetylase (305 aa).

Histidine 79, histidine 238, and aspartate 242 together coordinate Zn(2+). Histidine 265 functions as the Proton donor in the catalytic mechanism.

Belongs to the LpxC family. Zn(2+) is required as a cofactor.

It carries out the reaction a UDP-3-O-[(3R)-3-hydroxyacyl]-N-acetyl-alpha-D-glucosamine + H2O = a UDP-3-O-[(3R)-3-hydroxyacyl]-alpha-D-glucosamine + acetate. It functions in the pathway glycolipid biosynthesis; lipid IV(A) biosynthesis; lipid IV(A) from (3R)-3-hydroxytetradecanoyl-[acyl-carrier-protein] and UDP-N-acetyl-alpha-D-glucosamine: step 2/6. Catalyzes the hydrolysis of UDP-3-O-myristoyl-N-acetylglucosamine to form UDP-3-O-myristoylglucosamine and acetate, the committed step in lipid A biosynthesis. This chain is UDP-3-O-acyl-N-acetylglucosamine deacetylase, found in Shigella boydii serotype 4 (strain Sb227).